Here is a 346-residue protein sequence, read N- to C-terminus: MCEGPSRISGPIPPDPTLCPDYYRRPASAQGRLEGNALKLDLLTSGRDLDSSPPRGPRIRPEAREILERGQRGVGDVLLQLGCISLGSGVSPKRKNPKDHEKENLRRIKEIQRRFQDQERSREQGQPKPLKALWRSPKYDNVESRVKARMKELGPTSVTEPAHFLRAHSRCGPGLPPSRASSPQLALPGPQAKGPGLGVDFISRNALAAKRAPRRHSRSLQVLAQVQEQQRQAQERYNATQKGHVPHYLLERRDLWRKEAEARQRSQPDPSMPPGHTLMPENQRLETLNNLLQSQSQLLRELVLLPAGADSLRAQGHRAELDRKLVQIEEAIKIFSRPKVFVKMDT.

3 disordered regions span residues 1 to 24 (MCEGPSRISGPIPPDPTLCPDYYR), 88 to 107 (SGVSPKRKNPKDHEKENLRR), and 113 to 132 (RRFQDQERSREQGQPKPLKA). Ser91 is modified (phosphoserine). Basic and acidic residues-rich tracts occupy residues 98–107 (KDHEKENLRR) and 113–125 (RRFQDQERSREQG). Ser136 carries the post-translational modification Phosphoserine. An Enkurin domain is found at 251 to 343 (ERRDLWRKEA…IFSRPKVFVK (93 aa)). Positions 259 to 280 (EAEARQRSQPDPSMPPGHTLMP) are disordered.

In terms of assembly, interacts with alpha-tubulin. Interacts (via central region) with CCP110 (via N-terminal region); competes with CEP97 for binding to CCP110. As to expression, widely expressed with highest levels in testis and lung.

Its subcellular location is the cytoplasm. The protein resides in the cytoskeleton. It localises to the microtubule organizing center. The protein localises to the centrosome. It is found in the centriole. Its subcellular location is the cilium basal body. The protein resides in the cell projection. It localises to the cilium. The protein localises to the spindle. It is found in the spindle pole. Its subcellular location is the cilium axoneme. Functionally, microtubule-binding protein which regulates microtubule organization and stability. Promotes the stability of astral microtubules and facilitates the proper orientation of the mitotic spindle. This allows the oriented division of basal keratinocytes and contributes to epidermal stratification. Required for the assembly of both primary and motile cilia. Destabilizes the interaction between CCP110 and CEP97 by competing with CEP97 for binding to CCP110 which promotes the removal of CCP110 and CEP97 from the mother centriole and allows the initiation of ciliogenesis. This is Enkurin domain-containing protein 1 (Enkd1) from Mus musculus (Mouse).